Here is a 1593-residue protein sequence, read N- to C-terminus: Autotransporter CRAC (1593 aa).

A signal peptide spans 1–54 (MNKVYNTVWNESTGMWVVTSELTRKGGRRPRQIRRTALAGLIAGLLLPSAPALA). Residues 65–85 (GATSSSMSLNAGDTATDTTIN) are compositionally biased toward polar residues. Disordered regions lie at residues 65–100 (GATS…SATS) and 1267–1286 (KADS…PVPP). Low complexity predominate over residues 86–97 (SGGSQRVSSGGS). The span at 1269–1280 (DSSQPGTDNPGT) shows a compositional bias: polar residues. Positions 1325-1593 (NTRSPGGVWG…TGSVGFRINF (269 aa)) constitute an Autotransporter domain.

Glycosylated by heptosyltransferas BAHTCr. Glycosylation is required for adhesion to mammalian cells and colonization of the mouse host gastrointestinal tract.

The protein localises to the cell outer membrane. In terms of biological role, autotransporter required for the colonization of the mouse host gastrointestinal tract, possibly by mediating bacteria adhesion to host cells. This is Autotransporter CRAC from Citrobacter rodentium (strain ICC168) (Citrobacter freundii biotype 4280).